The chain runs to 543 residues: Alanine aminotransferase 1, mitochondrial (543 aa).

Residues 1–55 (MRRFVIGQAKNLIDQSRRRQLHHHKNLSFVSLIPPFSAPSDSSSRHLSSSSSSDM) constitute a mitochondrion transit peptide. Low complexity predominate over residues 43–63 (SSRHLSSSSSSDMSASDSSSS). The disordered stretch occupies residues 43-64 (SSRHLSSSSSSDMSASDSSSSL). Ser56 is subject to N-acetylserine. Residues Tyr173, 209–210 (AS), Tyr235, Asn291, Tyr322, and 354–356 (SFQ) contribute to the pyridoxal 5'-phosphate site. Position 360 is an N6-(pyridoxal phosphate)lysine (Lys360). Arg369 and Asn397 together coordinate pyridoxal 5'-phosphate.

Belongs to the class-I pyridoxal-phosphate-dependent aminotransferase family. Alanine aminotransferase subfamily. In terms of assembly, homodimer. It depends on pyridoxal 5'-phosphate as a cofactor. In terms of processing, the N-terminus is blocked. As to expression, mostly expressed in roots and shoots, mostly in vascular tissues, and, to a lower extent, in flowers and leaves.

Its subcellular location is the mitochondrion. The catalysed reaction is L-alanine + 2-oxoglutarate = pyruvate + L-glutamate. Its pathway is photosynthesis; C4 acid pathway. It participates in amino-acid degradation; L-alanine degradation via transaminase pathway; pyruvate from L-alanine: step 1/1. Functionally, is the major alanine aminotransferase in roots that catalyzes the conversion of alanine to pyruvate. Involved in the rapid conversion of alanine to pyruvate during recovery from low-oxygen stress. The chain is Alanine aminotransferase 1, mitochondrial from Arabidopsis thaliana (Mouse-ear cress).